A 69-amino-acid polypeptide reads, in one-letter code: MSFNLRGAVLANVSGNSQDQLQETIVDAIQSGEEKMLPGLGVLFEVIWKNADENEKHEMLGTLEQGLKK.

Belongs to the SspI family.

It localises to the spore core. This Bacillus mycoides (strain KBAB4) (Bacillus weihenstephanensis) protein is Small, acid-soluble spore protein I.